Reading from the N-terminus, the 468-residue chain is Peroxisome proliferator-activated receptor alpha (468 aa).

The nuclear receptor DNA-binding region spans 99 to 173 (NIECRICGDK…VGMSHNAIRF (75 aa)). 2 consecutive NR C4-type zinc fingers follow at residues 102–122 (CRICGDKASGYHYGVHACEGC) and 139–161 (CDRSCKIQKKNRNKCQYCRFHKC). Residues 239–466 (FVIHDMETLC…HPLLQEIYRD (228 aa)) form the NR LBD domain. Residues 304-433 (DQVTLLKYGV…PKLLQKMVDL (130 aa)) form a required for heterodimerization with RXRA region.

Belongs to the nuclear hormone receptor family. NR1 subfamily. In terms of assembly, heterodimer; with RXRA. This heterodimerization is required for DNA binding and transactivation activity. Interacts with NCOA3 coactivator. Interacts with CITED2; the interaction stimulates its transcriptional activity. Also interacts with PPARBP in vitro. Interacts with AKAP13, LPIN1, PRDM16 and coactivator NCOA6. Interacts with ASXL1 and ASXL2. Interacts with PER2. Interacts with SIRT1; the interaction seems to be modulated by NAD(+) levels. Interacts with CRY1 and CRY2. In hepatocytes, interacts with PAQR3 and HUWE1; the interactions promote PPARA poylubiquitination and HUWE1-mediated degradation. In terms of processing, phosphorylated. Ubiquitinated by E3 ubiquitin-protein ligase HUWE1; leading to proteasomal degradation. In terms of tissue distribution, expressed predominantly in liver and kidney.

The protein resides in the nucleus. Ligand-activated transcription factor. Key regulator of lipid metabolism. Activated by the endogenous ligand 1-palmitoyl-2-oleoyl-sn-glycerol-3-phosphocholine (16:0/18:1-GPC). Activated by oleylethanolamide, a naturally occurring lipid that regulates satiety. Receptor for peroxisome proliferators such as hypolipidemic drugs and fatty acids. Regulates the peroxisomal beta-oxidation pathway of fatty acids. Functions as a transcription activator for the ACOX1 and P450 genes. Transactivation activity requires heterodimerization with RXRA and is antagonized by NR2C2. May be required for the propagation of clock information to metabolic pathways regulated by PER2. The chain is Peroxisome proliferator-activated receptor alpha (Ppara) from Rattus norvegicus (Rat).